The following is a 23-amino-acid chain: uncharacterized protein (23 aa).

It is found in the plastid. It localises to the chloroplast. This is an uncharacterized protein from Zea mays (Maize).